A 303-amino-acid polypeptide reads, in one-letter code: Energy-coupling factor transporter ATP-binding protein EcfA2 (303 aa).

The region spanning 17–260 (LSVSNLSCFF…EAFLAHTTII (244 aa)) is the ABC transporter domain. 54-61 (GDSGSGKS) is an ATP binding site.

It belongs to the ABC transporter superfamily. Energy-coupling factor EcfA family. As to quaternary structure, forms a stable energy-coupling factor (ECF) transporter complex composed of 2 membrane-embedded substrate-binding proteins (S component), 2 ATP-binding proteins (A component) and 2 transmembrane proteins (T component).

The protein resides in the cell membrane. ATP-binding (A) component of a common energy-coupling factor (ECF) ABC-transporter complex. Unlike classic ABC transporters this ECF transporter provides the energy necessary to transport a number of different substrates. The protein is Energy-coupling factor transporter ATP-binding protein EcfA2 of Mycoplasma pneumoniae (strain ATCC 29342 / M129 / Subtype 1) (Mycoplasmoides pneumoniae).